A 135-amino-acid chain; its full sequence is Small ribosomal subunit protein uS11 (135 aa).

Belongs to the universal ribosomal protein uS11 family. As to quaternary structure, part of the 30S ribosomal subunit. Interacts with proteins S7 and S18. Binds to IF-3.

In terms of biological role, located on the platform of the 30S subunit, it bridges several disparate RNA helices of the 16S rRNA. Forms part of the Shine-Dalgarno cleft in the 70S ribosome. In Protochlamydia amoebophila (strain UWE25), this protein is Small ribosomal subunit protein uS11.